Reading from the N-terminus, the 314-residue chain is Homoserine O-acetyltransferase (314 aa).

C142 acts as the Acyl-thioester intermediate in catalysis. Residues K163 and S192 each coordinate substrate. Catalysis depends on H235, which acts as the Proton acceptor. The active site involves E237. Substrate is bound at residue R249.

It belongs to the MetA family.

Its subcellular location is the cytoplasm. The enzyme catalyses L-homoserine + acetyl-CoA = O-acetyl-L-homoserine + CoA. It functions in the pathway amino-acid biosynthesis; L-methionine biosynthesis via de novo pathway; O-acetyl-L-homoserine from L-homoserine: step 1/1. Functionally, transfers an acetyl group from acetyl-CoA to L-homoserine, forming acetyl-L-homoserine. The chain is Homoserine O-acetyltransferase from Azobacteroides pseudotrichonymphae genomovar. CFP2.